The following is a 216-amino-acid chain: Putative F-box protein At2g03610 (216 aa).

Positions 19–69 (NQDWSKLCPDLLRPILESLSSIDFHRAKTVCSDWYSVWKTCKGYDSKWNQN) constitute an F-box domain.

This Arabidopsis thaliana (Mouse-ear cress) protein is Putative F-box protein At2g03610.